A 352-amino-acid chain; its full sequence is Holliday junction branch migration complex subunit RuvB (352 aa).

The large ATPase domain (RuvB-L) stretch occupies residues 1-182; sequence MRIELLNTPP…FGINSRFDYY (182 aa). ATP is bound by residues isoleucine 21, arginine 22, glycine 63, lysine 66, threonine 67, threonine 68, 129–131, arginine 172, tyrosine 182, and arginine 219; that span reads EDF. Threonine 67 contacts Mg(2+). Residues 183–253 are small ATPAse domain (RuvB-S); that stretch reads EPELLTRIII…IAMKTLECLE (71 aa). The head domain (RuvB-H) stretch occupies residues 256–352; it reads EEGLDEMDKK…LPLFDESEAD (97 aa). Residues arginine 292, arginine 311, and arginine 316 each coordinate DNA.

This sequence belongs to the RuvB family. In terms of assembly, homohexamer. Forms an RuvA(8)-RuvB(12)-Holliday junction (HJ) complex. HJ DNA is sandwiched between 2 RuvA tetramers; dsDNA enters through RuvA and exits via RuvB. An RuvB hexamer assembles on each DNA strand where it exits the tetramer. Each RuvB hexamer is contacted by two RuvA subunits (via domain III) on 2 adjacent RuvB subunits; this complex drives branch migration. In the full resolvosome a probable DNA-RuvA(4)-RuvB(12)-RuvC(2) complex forms which resolves the HJ.

It is found in the cytoplasm. The catalysed reaction is ATP + H2O = ADP + phosphate + H(+). Its function is as follows. The RuvA-RuvB-RuvC complex processes Holliday junction (HJ) DNA during genetic recombination and DNA repair, while the RuvA-RuvB complex plays an important role in the rescue of blocked DNA replication forks via replication fork reversal (RFR). RuvA specifically binds to HJ cruciform DNA, conferring on it an open structure. The RuvB hexamer acts as an ATP-dependent pump, pulling dsDNA into and through the RuvAB complex. RuvB forms 2 homohexamers on either side of HJ DNA bound by 1 or 2 RuvA tetramers; 4 subunits per hexamer contact DNA at a time. Coordinated motions by a converter formed by DNA-disengaged RuvB subunits stimulates ATP hydrolysis and nucleotide exchange. Immobilization of the converter enables RuvB to convert the ATP-contained energy into a lever motion, pulling 2 nucleotides of DNA out of the RuvA tetramer per ATP hydrolyzed, thus driving DNA branch migration. The RuvB motors rotate together with the DNA substrate, which together with the progressing nucleotide cycle form the mechanistic basis for DNA recombination by continuous HJ branch migration. Branch migration allows RuvC to scan DNA until it finds its consensus sequence, where it cleaves and resolves cruciform DNA. The chain is Holliday junction branch migration complex subunit RuvB from Chlorobium chlorochromatii (strain CaD3).